The following is a 274-amino-acid chain: Protein RecA (274 aa).

43–50 (GPESSGKT) contributes to the ATP binding site.

It belongs to the RecA family.

The protein localises to the cytoplasm. In terms of biological role, can catalyze the hydrolysis of ATP in the presence of single-stranded DNA, the ATP-dependent uptake of single-stranded DNA by duplex DNA, and the ATP-dependent hybridization of homologous single-stranded DNAs. It interacts with LexA causing its activation and leading to its autocatalytic cleavage. The protein is Protein RecA of Neisseria pharyngis.